A 1331-amino-acid polypeptide reads, in one-letter code: Beta-mannanase/endoglucanase A (1331 aa).

The N-terminal stretch at 1–41 (MRLKTKIRKKWLSVLCTVVFLLNILFIANVTILPKVGAATS) is a signal peptide. Residues 42 to 325 (NDGVVKIDTS…YKTNAIGTSS (284 aa)) form a catalytic (mannanase) region. Glutamate 162 acts as the Proton donor in catalysis. Glutamate 257 serves as the catalytic Nucleophile. Disordered stretches follow at residues 319–363 (NAIG…TPAT), 515–566 (PSGA…TPAT), and 717–780 (EPSG…PLPT). Low complexity predominate over residues 323 to 335 (TSSTPTPTSTVTP). The 154-residue stretch at 363-516 (TSGQIKVLYA…GVLVWGQEPS (154 aa)) folds into the CBM3 1 domain. Pro residues-rich tracts occupy residues 521–541 (APAP…PTVT) and 551–561 (TPTPTPTPTPV). A CBM3 2 domain is found at 566–719 (TGGQIKVLYA…GVLVWGQEPS (154 aa)). Low complexity predominate over residues 721–735 (TTPSPTSTPTVTVTP). Composition is skewed to pro residues over residues 736-756 (TPTP…PTVT) and 766-780 (TPTP…PLPT). The catalytic (endoglucanase) stretch occupies residues 781–1331 (ISPSPSVVEI…RNLVFMRALV (551 aa)).

The protein in the N-terminal section; belongs to the glycosyl hydrolase 5 (cellulase A) family. In the C-terminal section; belongs to the glycosyl hydrolase 44 (cellulase J) family.

It catalyses the reaction Random hydrolysis of (1-&gt;4)-beta-D-mannosidic linkages in mannans, galactomannans and glucomannans.. The enzyme catalyses Endohydrolysis of (1-&gt;4)-beta-D-glucosidic linkages in cellulose, lichenin and cereal beta-D-glucans.. Its function is as follows. Degradation of hemicelluloses, the second most abundant polysaccharides in nature. Contains two catalytic domains with mannanase and endoglucanase activities. This chain is Beta-mannanase/endoglucanase A (manA), found in Caldicellulosiruptor saccharolyticus (Caldocellum saccharolyticum).